Reading from the N-terminus, the 226-residue chain is NAD(P)H-quinone oxidoreductase subunit K, chloroplastic (226 aa).

4 residues coordinate [4Fe-4S] cluster: Cys43, Cys44, Cys108, and Cys139.

Belongs to the complex I 20 kDa subunit family. In terms of assembly, NDH is composed of at least 16 different subunits, 5 of which are encoded in the nucleus. [4Fe-4S] cluster serves as cofactor.

Its subcellular location is the plastid. The protein resides in the chloroplast thylakoid membrane. The enzyme catalyses a plastoquinone + NADH + (n+1) H(+)(in) = a plastoquinol + NAD(+) + n H(+)(out). The catalysed reaction is a plastoquinone + NADPH + (n+1) H(+)(in) = a plastoquinol + NADP(+) + n H(+)(out). Its function is as follows. NDH shuttles electrons from NAD(P)H:plastoquinone, via FMN and iron-sulfur (Fe-S) centers, to quinones in the photosynthetic chain and possibly in a chloroplast respiratory chain. The immediate electron acceptor for the enzyme in this species is believed to be plastoquinone. Couples the redox reaction to proton translocation, and thus conserves the redox energy in a proton gradient. The sequence is that of NAD(P)H-quinone oxidoreductase subunit K, chloroplastic from Lupinus luteus (European yellow lupine).